A 447-amino-acid chain; its full sequence is MKREKAIIRQLISEKKRFEKIKEGDVMAGKDDFGTTKYIIHAEFEANGVVERPDVVGAIFGQTEGLLGDDLDLRELQKTGRIGRIKVEVHTKAGKSYGTILVPSSLDRVETAIIAAALETIDRVGPCEAKIRVVKIEDVRASKRKYIIERAKEILETLIEEEIPETQELVEEVRKAVREMELIEYGPEKLPAGPHVPFSDSIIVVEGRADVLNLLRHGIKNAIAVEGTSIPETIIKLSKERIVTAFTDGDRGGELILKELLQVADIDYVARAPEGKEVEELTKKEIIKALRSKVPAEEVYNELFNKGKSFYEIVREREGKVKEEPQEKAETQPKQQVKVNEKIVKPLPVIKQDYKGFEEFVERVKNSPDPVALLLDENKNIIAEVHTRDLLNAIEENDGVYAIVFNGIITQRLIDVVSEKGVRYLIGAKKANVVRRPITLKVITFAD.

The 75-residue stretch at 200-274 (DSIIVVEGRA…DIDYVARAPE (75 aa)) folds into the Toprim domain. Residues glutamate 206, aspartate 248, and aspartate 250 each contribute to the Mg(2+) site.

It belongs to the archaeal DnaG primase family. As to quaternary structure, forms a ternary complex with MCM helicase and DNA. Component of the archaeal exosome complex. Mg(2+) is required as a cofactor.

It catalyses the reaction ssDNA + n NTP = ssDNA/pppN(pN)n-1 hybrid + (n-1) diphosphate.. Its function is as follows. RNA polymerase that catalyzes the synthesis of short RNA molecules used as primers for DNA polymerase during DNA replication. Also part of the exosome, which is a complex involved in RNA degradation. Acts as a poly(A)-binding protein that enhances the interaction between heteromeric, adenine-rich transcripts and the exosome. The sequence is that of DNA primase DnaG from Pyrococcus horikoshii (strain ATCC 700860 / DSM 12428 / JCM 9974 / NBRC 100139 / OT-3).